Here is a 653-residue protein sequence, read N- to C-terminus: UvrABC system protein C (653 aa).

The 79-residue stretch at 44 to 122 (NAPGVYRMVN…IKRLRPRFNV (79 aa)) folds into the GIY-YIG domain. One can recognise a UVR domain in the interval 232–267 (STVKAEIATAMQEASQALDFERAAIYRDRLAALSHV).

It belongs to the UvrC family. In terms of assembly, interacts with UvrB in an incision complex.

It localises to the cytoplasm. Functionally, the UvrABC repair system catalyzes the recognition and processing of DNA lesions. UvrC both incises the 5' and 3' sides of the lesion. The N-terminal half is responsible for the 3' incision and the C-terminal half is responsible for the 5' incision. The sequence is that of UvrABC system protein C from Chelativorans sp. (strain BNC1).